Consider the following 177-residue polypeptide: Secretion monitor (177 aa).

The first 30 residues, 1–30 (MIGILNRWRQFGRRYFWPHLLLGMVAASLG), serve as a signal peptide directing secretion.

This sequence belongs to the SecM family.

It is found in the cytoplasm. The protein resides in the cytosol. Its subcellular location is the periplasm. Functionally, regulates secA expression by translational coupling of the secM secA operon. Translational pausing at a specific Pro residue 5 residues before the end of the protein may allow disruption of a mRNA repressor helix that normally suppresses secA translation initiation. The polypeptide is Secretion monitor (Yersinia enterocolitica serotype O:8 / biotype 1B (strain NCTC 13174 / 8081)).